A 396-amino-acid polypeptide reads, in one-letter code: Elongation factor Tu (396 aa).

The region spanning 10-206 is the tr-type G domain; the sequence is KPHVNVGTIG…TLDEYIPEPE (197 aa). Residues 19-26 are G1; the sequence is GHVDHGKT. 19 to 26 is a binding site for GTP; it reads GHVDHGKT. Residue Thr-26 coordinates Mg(2+). The segment at 60–64 is G2; the sequence is GITIA. The interval 81 to 84 is G3; sequence DCPG. GTP contacts are provided by residues 81 to 85 and 136 to 139; these read DCPGH and NKAD. The interval 136–139 is G4; the sequence is NKAD. The G5 stretch occupies residues 174 to 176; sequence SAL.

This sequence belongs to the TRAFAC class translation factor GTPase superfamily. Classic translation factor GTPase family. EF-Tu/EF-1A subfamily. Monomer.

The protein resides in the cytoplasm. It carries out the reaction GTP + H2O = GDP + phosphate + H(+). In terms of biological role, GTP hydrolase that promotes the GTP-dependent binding of aminoacyl-tRNA to the A-site of ribosomes during protein biosynthesis. The sequence is that of Elongation factor Tu from Alcanivorax borkumensis (strain ATCC 700651 / DSM 11573 / NCIMB 13689 / SK2).